The primary structure comprises 451 residues: Scaffold protein ILK (451 aa).

Met-1 carries the post-translational modification N-acetylmethionine. ANK repeat units lie at residues 2 to 30, 31 to 63, 64 to 96, 97 to 129, and 130 to 174; these read DDIFTQCREGNAVAVRLWLDNTENDLNQG, DDHGFSPLHWACREGRSAVVEMLIMRGARINVM, NRGDDTPLHLAASHGHRDIVQKLLQYKADINAV, NEHGNVPLHYACFWGQDQVAEDLVANGALVSIC, and NKYG…GTTR. Residues 33 to 139 form an interaction with LIMS1 region; sequence HGFSPLHWAC…NKYGEMPMDK (107 aa). A Phosphothreonine modification is found at Thr-173. Residues 180-212 form a PH-like; mediates interaction with TGFB1I1 region; sequence GTLNKHSGIDFKQLNFLAKLNENHSGELWKGRW. Ser-186 is modified (phosphoserine). A Protein kinase domain is found at 193–445; the sequence is LNFLAKLNEN…PKFDMIVPIL (253 aa). ATP contacts are provided by Asn-200, Asn-202, His-203, and Ser-204. The residue at position 246 (Ser-246) is a Phosphoserine. Residues His-270, Met-272, and Asn-279 each contribute to the ATP site. Position 339 (Asp-339) interacts with Mg(2+). Lys-341 provides a ligand contact to ATP. A Nuclear localization signal motif is present at residues 363-371; sequence KKPEDTNRR. Lys-425 is subject to N6-acetyllysine.

Belongs to the protein kinase superfamily. TKL Ser/Thr protein kinase family. In terms of assembly, component of the heterotrimeric IPP (ILK-PINCH-PARVIN) complex composed of ILK, LIMS1/PINCH and PARVA; the complex binds to F-actin via the C-terminal tail of LIMS1 and the N-terminal region of PARVA, promoting F-actin filament bundling. Formation of the IPP complex is dependent on protein kinase C and precedes integrin-mediated cell adhesion and spreading. ILK also interacts with LIMS2/PINCH2 and with PARVB and PARVG which may substitute for LIMS1 and PARVA in the IPP complex; PARVA and PARVB compete for the same binding site. Interaction with PARVG promotes the establishment of cell polarity required for leukocyte migration. Interacts with the cytoplasmic domain of integrin ITGB1 and may also interact with integrins ITGB2, ITGB3 and/or ITGB5. Interacts probably also with TGFB1I1. Interacts (via ANK repeats) with EPHA1 (via SAM domain); stimulated by EFNA1 but independent of the kinase activity of EPHA1. Interacts with FERMT2. Interacts with LIMD2; leading to activate the protein kinase activity. Interacts with PXN/PAXILLIN (via LD motif 4). Interacts with CCDC25 (via cytoplasmic region); initiating the ILK-PARVB cascade to induce cytoskeleton rearrangement and directional migration of cells. Interacts with IQGAP1; the interaction is required for localization of IQGAP1 to the cell cortex. Phosphorylation by PAK1 modulates ILK subcellular location by promoting its nuclear export.

The protein resides in the cell junction. The protein localises to the focal adhesion. Its subcellular location is the cell membrane. It is found in the cell projection. It localises to the lamellipodium. The protein resides in the cytoplasm. The protein localises to the myofibril. Its subcellular location is the sarcomere. It is found in the nucleus. It localises to the cytoskeleton. The protein resides in the microtubule organizing center. The protein localises to the centrosome. Its subcellular location is the cell cortex. In terms of biological role, scaffold protein which mediates protein-protein interactions during a range of cellular events including focal adhesion assembly, cell adhesion and cell migration. Regulates integrin-mediated signal transduction by contributing to inside-out integrin activation. Recruits PARVA and LIMS1/PITCH to form the heterotrimeric IPP (ILK-PINCH-PARVIN) complex which binds to F-actin via the C-terminal tail of LIMS1 and the N-terminal region of PARVA, promoting F-actin filament bundling, a process required to generate force for actin cytoskeleton reorganization and subsequent dynamic cell adhesion events such as cell spreading and migration. Binding to PARVA promotes effective assembly of ILK into focal adhesions while PARVA-bound ILK can simultaneously engage integrin-beta cytoplasmic tails to mediate cell adhesion. Plays a role with PARVG in promoting the cell adhesion and spreading of leukocytes. Acts as an upstream effector of both AKT1/PKB and GSK3. Mediates trafficking of caveolae to the cell surface in an ITGB1-dependent manner by promoting the recruitment of IQGAP1 to the cell cortex which cooperates with its effector DIAPH1 to locally stabilize microtubules and allow stable insertion of caveolae into the plasma membrane. Required for the maintenance of mitotic spindle integrity by promoting phosphorylation of TACC3 by AURKA. Associates with chromatin and may act as a negative regulator of transcription when located in the nucleus. This chain is Scaffold protein ILK, found in Cavia porcellus (Guinea pig).